The following is an 814-amino-acid chain: Dimethyl sulfoxide reductase DmsA (814 aa).

The tat-type signal signal peptide spans 1-45 (MKTKIPDAVLAAEVSRRGLVKTTAIGGLAMASSALTLPFSRIAHA). In terms of domain architecture, 4Fe-4S Mo/W bis-MGD-type spans 56 to 118 (EKVIWSACTV…SMRRRVYNPD (63 aa)). [4Fe-4S] cluster-binding residues include C63, C67, C71, and C104. Mo-bis(molybdopterin guanine dinucleotide)-binding positions include 172-176 (LGGTM), S205, 244-245 (ET), 270-271 (ID), 291-293 (GTD), 386-387 (WG), R390, N488, 512-513 (ID), H701, 707-709 (HST), N788, and 804-805 (SH).

The protein belongs to the prokaryotic molybdopterin-containing oxidoreductase family. Heterotrimeric enzyme composed of a catalytic heterodimer (DmsAB) and a membrane anchor protein (DmsC). Requires [4Fe-4S] cluster as cofactor. Mo-bis(molybdopterin guanine dinucleotide) serves as cofactor. In terms of processing, exported by the Tat system. The position of the signal peptide cleavage has been experimentally proven. Can also be exported by the Sec system.

The protein localises to the cell membrane. It catalyses the reaction dimethyl sulfide + a menaquinone + H2O = dimethyl sulfoxide + a menaquinol. With respect to regulation, inhibited by dithionite, sodium hydrogensulfite and tungstate. Functionally, catalyzes the reduction of dimethyl sulfoxide (DMSO) to dimethyl sulfide (DMS). DMSO reductase serves as the terminal reductase under anaerobic conditions, with DMSO being the terminal electron acceptor. Terminal reductase during anaerobic growth on various sulfoxides and N-oxide compounds. Allows E.coli to grow anaerobically on DMSO as respiratory oxidant. The protein is Dimethyl sulfoxide reductase DmsA (dmsA) of Escherichia coli (strain K12).